We begin with the raw amino-acid sequence, 172 residues long: Stellate protein CG33247 (172 aa).

This sequence belongs to the casein kinase 2 subunit beta family. As to quaternary structure, interacts in vitro with the casein kinase 2 alpha subunit (CkII-alpha). The relevance of such interaction is however unclear in vivo. In terms of tissue distribution, probably not expressed in wild-type flies. In males lacking the Y chromosome, it is testis-specific and constitutes the main component of star-shaped crystals.

In terms of biological role, unknown. In males lacking the Y chromosome, its strong overexpression leads to the appearance of proteinaceous star-shaped crystals in the primary spermatocytes causing meiotic drive, possibly by interfering with normal casein kinase 2 activity. The protein is Stellate protein CG33247 (Ste:CG33247) of Drosophila melanogaster (Fruit fly).